The sequence spans 196 residues: V-type proton ATPase subunit E (196 aa).

Belongs to the V-ATPase E subunit family.

Produces ATP from ADP in the presence of a proton gradient across the membrane. In Clostridium botulinum (strain Eklund 17B / Type B), this protein is V-type proton ATPase subunit E.